We begin with the raw amino-acid sequence, 87 residues long: MKTFEDLFAELSAKAARRPEGSKTVAELDAGVHGIGKKVVEEAAEVWMACEYESDAEAAEEISQLLYHVQVMMIAKGMSLEDVYTHL.

Belongs to the PRA-PH family.

The protein localises to the cytoplasm. The enzyme catalyses 1-(5-phospho-beta-D-ribosyl)-ATP + H2O = 1-(5-phospho-beta-D-ribosyl)-5'-AMP + diphosphate + H(+). It functions in the pathway amino-acid biosynthesis; L-histidine biosynthesis; L-histidine from 5-phospho-alpha-D-ribose 1-diphosphate: step 2/9. The polypeptide is Phosphoribosyl-ATP pyrophosphatase (Kocuria rhizophila (strain ATCC 9341 / DSM 348 / NBRC 103217 / DC2201)).